A 506-amino-acid chain; its full sequence is Cytochrome P450 monooxygenase tpcB (506 aa).

Position 450 (C450) interacts with heme.

This sequence belongs to the cytochrome P450 family. The cofactor is heme.

It functions in the pathway secondary metabolite biosynthesis; terpenoid biosynthesis. Functionally, cytochrome P450 monooxygenase; part of the gene cluster that mediates the biosynthesis of terpestacin. The bifunctional terpene synthase tpcA converts isopentenyl diphosphate (IPP) and dimethylallyl diphosphate (DMAPP) into the sesterterpene preterpestacin I. The C-terminal prenyltransferase (PT) domain of tpcA catalyzes formation of GFPP, whereas the N-terminal terpene cyclase (TC) domain catalyzes the cyclization of GFPP into preterpestacin I. The cytochrome P450 monooxygenase tpcB then hydroxylates preterpestacin I to yield 24-hydroxypreterpstacin I (renamed as preterpestacin II) whereas the cytochrome P450 monooxygenase tpcC further hydroxylates preterpestacin II to yield 16,17-dihydroxypreterpestacin II (renamed as preterpestacin III). Finally, the FAD-dependent monooxygenase tpcD converts preterpestacin III into terpestacin. The sequence is that of Cytochrome P450 monooxygenase tpcB from Cochliobolus heterostrophus (strain C5 / ATCC 48332 / race O) (Southern corn leaf blight fungus).